Reading from the N-terminus, the 367-residue chain is Cell-death-related nuclease 7 (367 aa).

The signal sequence occupies residues M1–G18. N253 carries an N-linked (GlcNAc...) asparagine glycan.

This sequence belongs to the DNase II family.

The polypeptide is Cell-death-related nuclease 7 (crn-7) (Caenorhabditis elegans).